The chain runs to 121 residues: Large ribosomal subunit protein bL20 (121 aa).

Belongs to the bacterial ribosomal protein bL20 family.

Binds directly to 23S ribosomal RNA and is necessary for the in vitro assembly process of the 50S ribosomal subunit. It is not involved in the protein synthesizing functions of that subunit. The sequence is that of Large ribosomal subunit protein bL20 from Mycoplasma mycoides subsp. mycoides SC (strain CCUG 32753 / NCTC 10114 / PG1).